We begin with the raw amino-acid sequence, 1286 residues long: Structural maintenance of chromosomes protein 4 (1286 aa).

The disordered stretch occupies residues M1–L51. Phosphoserine is present on residues S21, S27, and S40. ATP is bound at residue G111–S118. A Phosphoserine modification is found at S141. Residues R270 to A589 adopt a coiled-coil conformation. 2 positions are modified to N6-acetyllysine: K379 and K677. The 115-residue stretch at P611–V725 folds into the SMC hinge domain. 2 coiled-coil regions span residues E768–Q1018 and E1068–F1133. S980 carries the post-translational modification Phosphoserine.

It belongs to the SMC family. SMC4 subfamily. Forms a heterodimer with SMC2. Component of the condensin complex, which contains the SMC2 and SMC4 heterodimer, and three non SMC subunits that probably regulate the complex: BRRN1/CAPH, CNAP1/CAPD2 and CAPG.

It localises to the nucleus. The protein localises to the cytoplasm. It is found in the chromosome. In terms of biological role, central component of the condensin complex, a complex required for conversion of interphase chromatin into mitotic-like condense chromosomes. The condensin complex probably introduces positive supercoils into relaxed DNA in the presence of type I topoisomerases and converts nicked DNA into positive knotted forms in the presence of type II topoisomerases. This Mus musculus (Mouse) protein is Structural maintenance of chromosomes protein 4 (Smc4).